The chain runs to 455 residues: Zinc finger and BTB domain-containing protein 8A.2 (455 aa).

Residues 24-92 (CDCHIMIDGH…MYSGKLNLSG (69 aa)) form the BTB domain. 2 consecutive C2H2-type zinc fingers follow at residues 299–321 (FKCP…LLCH) and 327–350 (YPCQ…RTIH).

The protein resides in the nucleus. May be involved in transcriptional regulation. In Xenopus tropicalis (Western clawed frog), this protein is Zinc finger and BTB domain-containing protein 8A.2 (zbtb8a.2).